The sequence spans 244 residues: Monothiol glutaredoxin-4 (244 aa).

The Thioredoxin domain occupies 2-106 (SVEITFVEQF…LKAAIDEYIQ (105 aa)). The 98-residue stretch at 147–244 (NERLSTLTNA…NGELQEMLPN (98 aa)) folds into the Glutaredoxin domain. Position 164 (Lys164) interacts with glutathione. Cys172 provides a ligand contact to [2Fe-2S] cluster. Residues 201-205 (RQGLK) and 226-227 (LD) each bind glutathione.

Belongs to the glutaredoxin family. Monothiol subfamily. In terms of assembly, homodimer. Interacts with php4.

The protein localises to the cytoplasm. It is found in the nucleus. Its function is as follows. Monothiol glutaredoxin involved in the biogenesis of iron-sulfur clusters. Binds one iron-sulfur cluster per dimer. The iron-sulfur cluster is bound between subunits, and is complexed by a bound glutathione and a cysteine residue from each subunit. The polypeptide is Monothiol glutaredoxin-4 (grx4) (Schizosaccharomyces pombe (strain 972 / ATCC 24843) (Fission yeast)).